The chain runs to 83 residues: Kunitz-type serine protease inhibitor 161 (83 aa).

An N-terminal signal peptide occupies residues 1–24; that stretch reads MSSGGLLLLLGLLTLWAELTPVSS. The BPTI/Kunitz inhibitor domain occupies 31-81; it reads CHLPADSGSCKGNFQAFYYHPVHRTCLEFIYGGCEGNANNFKTMDECKRTC. Intrachain disulfides connect Cys-31–Cys-81, Cys-40–Cys-64, and Cys-56–Cys-77.

The protein belongs to the venom Kunitz-type family. Expressed by the venom gland.

The protein localises to the secreted. Serine protease inhibitor. This is Kunitz-type serine protease inhibitor 161 from Drysdalia coronoides (White-lipped snake).